A 400-amino-acid polypeptide reads, in one-letter code: Na(+)/H(+) antiporter NhaA (400 aa).

A run of 11 helical transmembrane segments spans residues 10–30 (FNLE…AMII), 60–80 (AHHW…GLEL), 95–115 (IILP…VYLF), 126–146 (GWAI…SLLG), 155–175 (VFLV…IALF), 178–198 (NDLS…LYML), 218–238 (IAVL…ALFI), 265–285 (GILP…AGFG), 295–315 (IAAG…WLIF), 334–354 (AALL…LAFA), and 364–384 (LGII…LKTT).

Belongs to the NhaA Na(+)/H(+) (TC 2.A.33) antiporter family.

It localises to the cell inner membrane. It carries out the reaction Na(+)(in) + 2 H(+)(out) = Na(+)(out) + 2 H(+)(in). Functionally, na(+)/H(+) antiporter that extrudes sodium in exchange for external protons. This is Na(+)/H(+) antiporter NhaA from Psychrobacter arcticus (strain DSM 17307 / VKM B-2377 / 273-4).